A 74-amino-acid chain; its full sequence is uncharacterized protein (74 aa).

Composition is skewed to basic and acidic residues over residues 1–13 (MKKQKSIDKHQLK) and 20–60 (IKAK…KSFE). The disordered stretch occupies residues 1-74 (MKKQKSIDKH…ESQMDWHQYK (74 aa)). Positions 64–74 (NESQMDWHQYK) are enriched in polar residues.

This is an uncharacterized protein from Bacillus subtilis (strain 168).